Consider the following 374-residue polypeptide: Cytochrome b (374 aa).

4 consecutive transmembrane segments (helical) span residues 25-45 (FGSM…FLAI), 69-90 (WIIQ…YMHI), 105-125 (WLSG…GYVL), and 170-190 (FFAL…IHII). Residues H75 and H89 each coordinate heme b. Positions 174 and 188 each coordinate heme b. Residue H193 participates in a ubiquinone binding. The next 4 helical transmembrane spans lie at 218–238 (YKDM…LSFT), 280–300 (LGGA…PFTH), 312–332 (LAQI…WTAT), and 339–358 (FITI…MINP).

The protein belongs to the cytochrome b family. In terms of assembly, the cytochrome bc1 complex contains 3 respiratory subunits (MT-CYB, CYC1 and UQCRFS1), 2 core proteins (UQCRC1 and UQCRC2) and probably 6 low-molecular weight proteins. It depends on heme b as a cofactor.

The protein localises to the mitochondrion inner membrane. In terms of biological role, component of the ubiquinol-cytochrome c reductase complex (complex III or cytochrome b-c1 complex) that is part of the mitochondrial respiratory chain. The b-c1 complex mediates electron transfer from ubiquinol to cytochrome c. Contributes to the generation of a proton gradient across the mitochondrial membrane that is then used for ATP synthesis. The protein is Cytochrome b (MT-CYB) of Calliophis bivirgatus (Blue Malaysian coral snake).